The sequence spans 374 residues: Putative glutamate--cysteine ligase 2 (374 aa).

This sequence belongs to the glutamate--cysteine ligase type 2 family. YbdK subfamily.

The enzyme catalyses L-cysteine + L-glutamate + ATP = gamma-L-glutamyl-L-cysteine + ADP + phosphate + H(+). Functionally, ATP-dependent carboxylate-amine ligase which exhibits weak glutamate--cysteine ligase activity. The polypeptide is Putative glutamate--cysteine ligase 2 (Acidovorax ebreus (strain TPSY) (Diaphorobacter sp. (strain TPSY))).